A 209-amino-acid chain; its full sequence is Kynurenine formamidase (209 aa).

Substrate is bound at residue Phe-18. Residues His-48, His-52, and Asp-54 each contribute to the Zn(2+) site. Catalysis depends on His-58, which acts as the Proton donor/acceptor. His-160 and Glu-172 together coordinate Zn(2+).

It belongs to the Cyclase 1 superfamily. KynB family. Homodimer. Zn(2+) is required as a cofactor.

It catalyses the reaction N-formyl-L-kynurenine + H2O = L-kynurenine + formate + H(+). It participates in amino-acid degradation; L-tryptophan degradation via kynurenine pathway; L-kynurenine from L-tryptophan: step 2/2. Functionally, catalyzes the hydrolysis of N-formyl-L-kynurenine to L-kynurenine, the second step in the kynurenine pathway of tryptophan degradation. This chain is Kynurenine formamidase, found in Bordetella bronchiseptica (strain ATCC BAA-588 / NCTC 13252 / RB50) (Alcaligenes bronchisepticus).